We begin with the raw amino-acid sequence, 396 residues long: Lipid-A-disaccharide synthase (396 aa).

The protein belongs to the LpxB family.

The catalysed reaction is a lipid X + a UDP-2-N,3-O-bis[(3R)-3-hydroxyacyl]-alpha-D-glucosamine = a lipid A disaccharide + UDP + H(+). The protein operates within bacterial outer membrane biogenesis; LPS lipid A biosynthesis. Functionally, condensation of UDP-2,3-diacylglucosamine and 2,3-diacylglucosamine-1-phosphate to form lipid A disaccharide, a precursor of lipid A, a phosphorylated glycolipid that anchors the lipopolysaccharide to the outer membrane of the cell. In Nitrobacter winogradskyi (strain ATCC 25391 / DSM 10237 / CIP 104748 / NCIMB 11846 / Nb-255), this protein is Lipid-A-disaccharide synthase.